The chain runs to 389 residues: MTLRSLILEMRSRPHRVVHDLAAAAAADSTSVSSQDYRWSEIPEELLREILIRVEAADGGGWPSRRSVVACAGVCRGWRLLMNETVVVPEISSKLTFPISLKQPGPRDSLVQCFIKRNRITQSYHLYLGLTNSLTDDGKFLLAACKLKHTTCTDYIISLRSDDMSRRSQAYVGKVRSNFLGTKFTVFDGNLLPSTGAAKLRKSRSYNPAKVSAKVPLGSYPVAHITYELNVLGSRGPRKMQCLMDTIPTSTMEPQGVASEPSEFPLLGTRSTLSRSQSKPLRSSSSHLKETPLVLSNKTPRWHEQLRCWCLNFHGRVTVASVKNFQLVAAGASCGSGTGMSPERQSERIILQFGKVGKDMFTMDYGYPISAFQAFAICLSSFETRIACE.

The 47-residue stretch at 36–82 (DYRWSEIPEELLREILIRVEAADGGGWPSRRSVVACAGVCRGWRLLM) folds into the F-box domain. Residues 250-289 (STMEPQGVASEPSEFPLLGTRSTLSRSQSKPLRSSSSHLK) form a disordered region. Low complexity predominate over residues 273-286 (LSRSQSKPLRSSSS).

The protein belongs to the TUB family. Ubiquitous.

This chain is Tubby-like F-box protein 11, found in Arabidopsis thaliana (Mouse-ear cress).